An 88-amino-acid chain; its full sequence is Large ribosomal subunit protein bL27 (88 aa).

The tract at residues 1–21 (MAHKKGQGSTQNNRDSAGRRL) is disordered.

It belongs to the bacterial ribosomal protein bL27 family.

The polypeptide is Large ribosomal subunit protein bL27 (Helicobacter acinonychis (strain Sheeba)).